Reading from the N-terminus, the 538-residue chain is Sensor protein CitS (538 aa).

Topologically, residues 1 to 13 are cytoplasmic; sequence MKRRLFPLTFSAK. A helical transmembrane segment spans residues 14 to 34; it reads MMGFIALLIIAMFVLLGVFLN. Topologically, residues 35 to 174 are extracellular; it reads EQYARTLEEQ…DIQQVIGERL (140 aa). Residues 175–195 form a helical membrane-spanning segment; that stretch reads IAMWQIVVVIMILGLMGTWLV. At 196 to 538 the chain is on the cytoplasmic side; sequence ANTVKKATLG…TIPKHEAKEG (343 aa). In terms of domain architecture, PAS spans 216–282; it reads QQKEAILQSI…PEVLQVGKGQ (67 aa). A Histidine kinase domain is found at 339–534; sequence AQTHEFSNKL…CFVLTIPKHE (196 aa). Phosphohistidine; by autocatalysis is present on H342.

It localises to the cell membrane. The enzyme catalyses ATP + protein L-histidine = ADP + protein N-phospho-L-histidine.. Its function is as follows. Member of the two-component regulatory system CitT/CitS. Functions probably as a membrane-associated protein kinase that phosphorylates CitT in response to environmental citrate or Mg(2+)-citrate complex. The sequence is that of Sensor protein CitS (citS) from Halalkalibacterium halodurans (strain ATCC BAA-125 / DSM 18197 / FERM 7344 / JCM 9153 / C-125) (Bacillus halodurans).